A 384-amino-acid polypeptide reads, in one-letter code: PqqA peptide cyclase (384 aa).

Residues 5-220 (VGLPLWLLAE…TNEYREKLKA (216 aa)) enclose the Radical SAM core domain. C19, C23, and C26 together coordinate [4Fe-4S] cluster.

This sequence belongs to the radical SAM superfamily. PqqE family. Interacts with PqqD. The interaction is necessary for activity of PqqE. It depends on [4Fe-4S] cluster as a cofactor.

The enzyme catalyses [PQQ precursor protein] + S-adenosyl-L-methionine = E-Y cross-linked-[PQQ precursor protein] + 5'-deoxyadenosine + L-methionine + H(+). Its pathway is cofactor biosynthesis; pyrroloquinoline quinone biosynthesis. Functionally, catalyzes the cross-linking of a glutamate residue and a tyrosine residue in the PqqA protein as part of the biosynthesis of pyrroloquinoline quinone (PQQ). The chain is PqqA peptide cyclase from Acinetobacter baumannii (strain AB0057).